Consider the following 347-residue polypeptide: Probable dual-specificity RNA methyltransferase RlmN (347 aa).

The active-site Proton acceptor is the Glu93. The Radical SAM core domain occupies 100 to 323 (KAKRKTACVS…KKAGLNISTR (224 aa)). Cys107 and Cys334 form a disulfide bridge. Residues Cys114, Cys118, and Cys121 each coordinate [4Fe-4S] cluster. S-adenosyl-L-methionine is bound by residues 160-161 (GE), Ser192, 215-217 (SLT), and Asn291. The active-site S-methylcysteine intermediate is Cys334.

This sequence belongs to the radical SAM superfamily. RlmN family. It depends on [4Fe-4S] cluster as a cofactor.

It is found in the cytoplasm. The enzyme catalyses adenosine(2503) in 23S rRNA + 2 reduced [2Fe-2S]-[ferredoxin] + 2 S-adenosyl-L-methionine = 2-methyladenosine(2503) in 23S rRNA + 5'-deoxyadenosine + L-methionine + 2 oxidized [2Fe-2S]-[ferredoxin] + S-adenosyl-L-homocysteine. The catalysed reaction is adenosine(37) in tRNA + 2 reduced [2Fe-2S]-[ferredoxin] + 2 S-adenosyl-L-methionine = 2-methyladenosine(37) in tRNA + 5'-deoxyadenosine + L-methionine + 2 oxidized [2Fe-2S]-[ferredoxin] + S-adenosyl-L-homocysteine. Specifically methylates position 2 of adenine 2503 in 23S rRNA and position 2 of adenine 37 in tRNAs. In Treponema denticola (strain ATCC 35405 / DSM 14222 / CIP 103919 / JCM 8153 / KCTC 15104), this protein is Probable dual-specificity RNA methyltransferase RlmN.